The sequence spans 186 residues: ATP synthase subunit delta (186 aa).

This sequence belongs to the ATPase delta chain family. As to quaternary structure, F-type ATPases have 2 components, F(1) - the catalytic core - and F(0) - the membrane proton channel. F(1) has five subunits: alpha(3), beta(3), gamma(1), delta(1), epsilon(1). F(0) has three main subunits: a(1), b(2) and c(10-14). The alpha and beta chains form an alternating ring which encloses part of the gamma chain. F(1) is attached to F(0) by a central stalk formed by the gamma and epsilon chains, while a peripheral stalk is formed by the delta and b chains.

The protein resides in the cell membrane. In terms of biological role, f(1)F(0) ATP synthase produces ATP from ADP in the presence of a proton or sodium gradient. F-type ATPases consist of two structural domains, F(1) containing the extramembraneous catalytic core and F(0) containing the membrane proton channel, linked together by a central stalk and a peripheral stalk. During catalysis, ATP synthesis in the catalytic domain of F(1) is coupled via a rotary mechanism of the central stalk subunits to proton translocation. This protein is part of the stalk that links CF(0) to CF(1). It either transmits conformational changes from CF(0) to CF(1) or is implicated in proton conduction. The chain is ATP synthase subunit delta from Wolbachia sp. subsp. Brugia malayi (strain TRS).